The sequence spans 144 residues: UPF0179 protein PF1381 (144 aa).

It belongs to the UPF0179 family.

The protein is UPF0179 protein PF1381 of Pyrococcus furiosus (strain ATCC 43587 / DSM 3638 / JCM 8422 / Vc1).